Consider the following 348-residue polypeptide: Probable dual-specificity RNA methyltransferase RlmN (348 aa).

E92 functions as the Proton acceptor in the catalytic mechanism. The Radical SAM core domain occupies 98 to 331; the sequence is HPDRVTACIS…NEIRREKGTD (234 aa). Residues C105 and C336 are joined by a disulfide bond. Positions 112, 116, and 119 each coordinate [4Fe-4S] cluster. S-adenosyl-L-methionine contacts are provided by residues 159 to 160, S191, 214 to 216, and N290; these read GE and SLH. C336 (S-methylcysteine intermediate) is an active-site residue.

It belongs to the radical SAM superfamily. RlmN family. [4Fe-4S] cluster serves as cofactor.

It is found in the cytoplasm. It catalyses the reaction adenosine(2503) in 23S rRNA + 2 reduced [2Fe-2S]-[ferredoxin] + 2 S-adenosyl-L-methionine = 2-methyladenosine(2503) in 23S rRNA + 5'-deoxyadenosine + L-methionine + 2 oxidized [2Fe-2S]-[ferredoxin] + S-adenosyl-L-homocysteine. The catalysed reaction is adenosine(37) in tRNA + 2 reduced [2Fe-2S]-[ferredoxin] + 2 S-adenosyl-L-methionine = 2-methyladenosine(37) in tRNA + 5'-deoxyadenosine + L-methionine + 2 oxidized [2Fe-2S]-[ferredoxin] + S-adenosyl-L-homocysteine. Its function is as follows. Specifically methylates position 2 of adenine 2503 in 23S rRNA and position 2 of adenine 37 in tRNAs. This is Probable dual-specificity RNA methyltransferase RlmN from Fervidobacterium nodosum (strain ATCC 35602 / DSM 5306 / Rt17-B1).